Consider the following 404-residue polypeptide: Formate-dependent phosphoribosylglycinamide formyltransferase (404 aa).

N(1)-(5-phospho-beta-D-ribosyl)glycinamide contacts are provided by residues 25–26 (EL) and glutamate 85. ATP contacts are provided by residues arginine 118, lysine 159, 164-169 (SSGKGQ), 199-202 (EGFI), and glutamate 207. In terms of domain architecture, ATP-grasp spans 123 to 318 (RLAAEELGLP…EFELHARAIL (196 aa)). Residues glutamate 277 and glutamate 289 each coordinate Mg(2+). N(1)-(5-phospho-beta-D-ribosyl)glycinamide-binding positions include aspartate 296, lysine 365, and 372 to 373 (RR).

Belongs to the PurK/PurT family. Homodimer.

The enzyme catalyses N(1)-(5-phospho-beta-D-ribosyl)glycinamide + formate + ATP = N(2)-formyl-N(1)-(5-phospho-beta-D-ribosyl)glycinamide + ADP + phosphate + H(+). It participates in purine metabolism; IMP biosynthesis via de novo pathway; N(2)-formyl-N(1)-(5-phospho-D-ribosyl)glycinamide from N(1)-(5-phospho-D-ribosyl)glycinamide (formate route): step 1/1. In terms of biological role, involved in the de novo purine biosynthesis. Catalyzes the transfer of formate to 5-phospho-ribosyl-glycinamide (GAR), producing 5-phospho-ribosyl-N-formylglycinamide (FGAR). Formate is provided by PurU via hydrolysis of 10-formyl-tetrahydrofolate. The protein is Formate-dependent phosphoribosylglycinamide formyltransferase of Burkholderia mallei (strain NCTC 10247).